A 194-amino-acid polypeptide reads, in one-letter code: Cupin-domain-containing oxidoreductase virC (194 aa).

Residues 106-175 (IDFAPNVISP…GTLPGRMMWV (70 aa)) form the Cupin type-2 domain.

It belongs to the virC family.

It functions in the pathway secondary metabolite biosynthesis. Functionally, cupin-domain-containing oxidoreductase; part of the gene cluster that mediates the biosynthesis of virensols and trichoxide, fungal natural products that contain or are derived from a salicylaldehyde core. The pathway begins with the synthesis of the reduced chain in virensol C by the highly reducing polyketide synthase virA via condensation of one acetate and 8 malonate units. VirA has interesting programming rules since the first 2 ketides are fully reduced, the 3 following ketides undergo beta-dehydration, and the last 3 ketides are only reduced to beta-hydroxys to yield the trihydroxy portion. The production of aldehyde virensol C by virA alone is surprising, since virA does not contain a reductase (R) domain that is typically associated with reductive product release in HRPKS. The cupin-domain enzyme virC is involved in enhancing virA product turnover. The short-chain dehydrogenase virB then oxidizes the C-7 alcohol of virensol C to a ketone, yielding virensol D. Virensol D is further transformed to salicylaldehyde 5-deoxyaurocitrin by the short-chain dehydrogenase virD. VirD catalyzes the dehydrogenation of C-3 to form the beta-ketone aldehyde, which is followed by the generation of the nucleophilic C-2 that is required for the intramolecular aldol condensation between C-2 and C-7, itself followed by dehydration and aromatization which leads to salicylaldehyde 5-deoxyaurocitrin. While the dehydrogenation of virensol D is definitely catalyzed by virD, the aldol condensation and dehydration may be uncatalyzed or assisted by virD. The short chain dehydrogenase virG then converts salicylaldehyde 5-deoxyaurocitrin into virensol B which is further hydroxylated by the cytochrome P450 monooxygenase virE to yield the hydroquinone virensol A. VirI then may oxidize virensol A to form the quinone, while virH performs the epoxidation. Finally, the two remaining short-chain dehydrogenases, virK and virL, are probably responsible for reducing the ketones to the corresponding alcohols to furnish the epoxycyclohexanol structure in trichoxide. The protein is Cupin-domain-containing oxidoreductase virC of Hypocrea virens (strain Gv29-8 / FGSC 10586) (Gliocladium virens).